Consider the following 471-residue polypeptide: Anthranilate 1,2-dioxygenase large subunit (471 aa).

The 109-residue stretch at 52–160 (IYACHESEIP…IASYRGFVFV (109 aa)) folds into the Rieske domain. Residues C93, H95, C113, and H116 each coordinate [2Fe-2S] cluster. Fe cation is bound by residues H220, H225, and D379.

This sequence belongs to the bacterial ring-hydroxylating dioxygenase alpha subunit family. In terms of assembly, the anthranilate dioxygenase (AntDO) multicomponent enzyme system is composed of an oxygenase component and a NADH:acceptor reductase component (AntC). The oxygenase component is a heterohexamer of 3 large (AntA) and 3 small (AntB) subunits. Fe cation serves as cofactor. It depends on [2Fe-2S] cluster as a cofactor.

It catalyses the reaction anthranilate + NADH + O2 + 3 H(+) = catechol + NH4(+) + CO2 + NAD(+). The enzyme catalyses anthranilate + NADPH + O2 + 3 H(+) = catechol + NH4(+) + CO2 + NADP(+). It functions in the pathway aromatic compound metabolism; anthranilate degradation via hydroxylation; catechol from anthranilate: step 1/1. Component of anthranilate dioxygenase multicomponent enzyme system which catalyzes the incorporation of both atoms of molecular oxygen into anthranilate to form catechol. This chain is Anthranilate 1,2-dioxygenase large subunit, found in Acinetobacter baylyi (strain ATCC 33305 / BD413 / ADP1).